A 131-amino-acid polypeptide reads, in one-letter code: Fluoride-specific ion channel FluC 2 (131 aa).

The next 4 membrane-spanning stretches (helical) occupy residues 5–25 (SAVFIGGALGACLRYGLNLWI), 35–55 (WLENAAGSLLLGILTGFFMIG), 59–79 (PLLSAFLGTGFCGGFTTMSTF), and 95–115 (LLYVAASLISGIIFALIGVFV). Na(+) contacts are provided by Gly-71 and Thr-74.

This sequence belongs to the fluoride channel Fluc/FEX (TC 1.A.43) family.

Its subcellular location is the cell membrane. The catalysed reaction is fluoride(in) = fluoride(out). With respect to regulation, na(+) is not transported, but it plays an essential structural role and its presence is essential for fluoride channel function. In terms of biological role, fluoride-specific ion channel. Important for reducing fluoride concentration in the cell, thus reducing its toxicity. This is Fluoride-specific ion channel FluC 2 from Bacillus subtilis (strain 168).